A 737-amino-acid polypeptide reads, in one-letter code: MAKQVFQTTFAGRELIVETGQVAKQANGSVVVRYGESTVLTAAVMSKKMATGDFFPLQVNYEEKMYAAGKFPGGFMKREGRPSTDATLTARLIDRPIRPMFAEGFRNEVQVINTVLSYDENASAPMAAMFGSSLALSISDIPFDGPIAGVQVGYVDGQIIINPSQEQAEQSLLELTVAGTKHAINMVESGAKELSEEIMLEALLKGHEAVKELIAFQEEIVAAVGKEKAEVELLHVDAELQAEIIAAYNSDLQKAVQVEEKLAREAATQAVKDQVTAVYEEKYANHEEFDRIMRDVAEILEQMEHAEVRRLITEDKVRPDGRKVDEIRPLDAVVDFLPRVHGSGLFTRGQTQALSVLTLAPMGETQIIDGLDPEYKKRFMHHYNFPQYSVGETGRYGAPGRREIGHGALGERALAQVLPSLEEFPYAIRLVAEVLESNGSSSQASICAGTLALMAGGVPIKAPVAGIAMGLISDGNNYTVLTDIQGLEDHFGDMDFKVAGTRDGITALQMDIKIQGITAEILTEALAQAKKARFEILDVIEATIPEVRPELAPTAPKIDTIKIDVDKIKIVIGKGGETIDKIIAETGVKIDIDEEGNVSIYSSDQDAINRAKEIIAGLVREAKVDEVYRAKVVRIEKFGAFVNLFDKTDALVHISEMAWTRTNRVEDLVEIGDEVDVKVIKIDEKGRIDASMKALLPRPPKPEHDEKGEKSERPHRPRHQKDYKPKKEFTETPKDSE.

Positions 489 and 495 each coordinate Mg(2+). A KH domain is found at 556 to 615 (PKIDTIKIDVDKIKIVIGKGGETIDKIIAETGVKIDIDEEGNVSIYSSDQDAINRAKEII). The region spanning 625–693 (DEVYRAKVVR…EKGRIDASMK (69 aa)) is the S1 motif domain. The interval 691–737 (SMKALLPRPPKPEHDEKGEKSERPHRPRHQKDYKPKKEFTETPKDSE) is disordered. Residues 700–737 (PKPEHDEKGEKSERPHRPRHQKDYKPKKEFTETPKDSE) are compositionally biased toward basic and acidic residues.

This sequence belongs to the polyribonucleotide nucleotidyltransferase family. Requires Mg(2+) as cofactor.

It is found in the cytoplasm. It carries out the reaction RNA(n+1) + phosphate = RNA(n) + a ribonucleoside 5'-diphosphate. In terms of biological role, involved in mRNA degradation. Catalyzes the phosphorolysis of single-stranded polyribonucleotides processively in the 3'- to 5'-direction. The protein is Polyribonucleotide nucleotidyltransferase of Streptococcus pneumoniae serotype 2 (strain D39 / NCTC 7466).